The primary structure comprises 144 residues: Large ribosomal subunit protein uL15 (144 aa).

The interval 1–53 (MRLNTLSPAEGAKHSAKRLGRGIGSGLGKTGGRGHKGQKSRTGGGVRRGFEGG) is disordered. The span at 21–31 (RGIGSGLGKTG) shows a compositional bias: gly residues.

The protein belongs to the universal ribosomal protein uL15 family. In terms of assembly, part of the 50S ribosomal subunit.

In terms of biological role, binds to the 23S rRNA. The polypeptide is Large ribosomal subunit protein uL15 (Haemophilus influenzae (strain ATCC 51907 / DSM 11121 / KW20 / Rd)).